A 302-amino-acid chain; its full sequence is RING-H2 finger protein ATL38 (302 aa).

A helical transmembrane segment spans residues Leu15–Phe35. An RING-type; atypical zinc finger spans residues Cys96 to Arg138. The interval Gly279 to Val302 is disordered. Basic and acidic residues predominate over residues Lys286 to Val302.

Belongs to the RING-type zinc finger family. ATL subfamily.

The protein resides in the membrane. The enzyme catalyses S-ubiquitinyl-[E2 ubiquitin-conjugating enzyme]-L-cysteine + [acceptor protein]-L-lysine = [E2 ubiquitin-conjugating enzyme]-L-cysteine + N(6)-ubiquitinyl-[acceptor protein]-L-lysine.. It participates in protein modification; protein ubiquitination. This Arabidopsis thaliana (Mouse-ear cress) protein is RING-H2 finger protein ATL38 (ATL38).